Here is a 103-residue protein sequence, read N- to C-terminus: ATP synthase subunit c (103 aa).

A run of 3 helical transmembrane segments spans residues 3–23 (FLALLCLGMVGFAFGAEVSGL), 30–50 (SIAGAVIGLGIAALGGAIGMG), and 74–94 (MFIALALIEAQVIYTLVLALI).

Belongs to the ATPase C chain family. In terms of assembly, F-type ATPases have 2 components, F(1) - the catalytic core - and F(0) - the membrane proton channel. F(1) has five subunits: alpha(3), beta(3), gamma(1), delta(1), epsilon(1). F(0) has three main subunits: a(1), b(2) and c(10-14). The alpha and beta chains form an alternating ring which encloses part of the gamma chain. F(1) is attached to F(0) by a central stalk formed by the gamma and epsilon chains, while a peripheral stalk is formed by the delta and b chains.

The protein localises to the cell inner membrane. In terms of biological role, f(1)F(0) ATP synthase produces ATP from ADP in the presence of a proton or sodium gradient. F-type ATPases consist of two structural domains, F(1) containing the extramembraneous catalytic core and F(0) containing the membrane proton channel, linked together by a central stalk and a peripheral stalk. During catalysis, ATP synthesis in the catalytic domain of F(1) is coupled via a rotary mechanism of the central stalk subunits to proton translocation. Its function is as follows. Key component of the F(0) channel; it plays a direct role in translocation across the membrane. A homomeric c-ring of between 10-14 subunits forms the central stalk rotor element with the F(1) delta and epsilon subunits. The chain is ATP synthase subunit c from Helicobacter hepaticus (strain ATCC 51449 / 3B1).